Here is a 132-residue protein sequence, read N- to C-terminus: Small ribosomal subunit protein uS8 (132 aa).

The protein belongs to the universal ribosomal protein uS8 family. Part of the 30S ribosomal subunit. Contacts proteins S5 and S12.

One of the primary rRNA binding proteins, it binds directly to 16S rRNA central domain where it helps coordinate assembly of the platform of the 30S subunit. This chain is Small ribosomal subunit protein uS8, found in Clostridium acetobutylicum (strain ATCC 824 / DSM 792 / JCM 1419 / IAM 19013 / LMG 5710 / NBRC 13948 / NRRL B-527 / VKM B-1787 / 2291 / W).